The following is a 1144-amino-acid chain: Alpha-mannosidase 2 (1144 aa).

The Cytoplasmic portion of the chain corresponds to 1–5 (MKLSR). Residues 6–26 (QFTVFGSAIFCVVIFSLYLML) form a helical; Signal-anchor for type II membrane protein membrane-spanning segment. Residues 27–1144 (DRGHLDYPRN…EISTFRIQLR (1118 aa)) lie on the Lumenal side of the membrane. N78 is a glycosylation site (N-linked (GlcNAc...) asparagine). Residues S80 and S82 each carry the phosphoserine modification. A glycan (N-linked (GlcNAc...) asparagine) is linked at N93. Zn(2+) contacts are provided by H175, D177, D289, and H569. D289 functions as the Nucleophile in the catalytic mechanism. The N-linked (GlcNAc...) asparagine glycan is linked to N1125.

Belongs to the glycosyl hydrolase 38 family. As to quaternary structure, homodimer; disulfide-linked. It depends on Zn(2+) as a cofactor. Glycosylated.

The protein localises to the golgi apparatus membrane. The enzyme catalyses N(4)-{beta-D-GlcNAc-(1-&gt;2)-alpha-D-Man-(1-&gt;3)-[alpha-D-Man-(1-&gt;3)-[alpha-D-Man-(1-&gt;6)]-alpha-D-Man-(1-&gt;6)]-beta-D-Man-(1-&gt;4)-beta-D-GlcNAc-(1-&gt;4)-beta-D-GlcNAc}-L-asparaginyl-[protein] + 2 H2O = 2 alpha-D-mannopyranose + an N(4)-{beta-D-GlcNAc-(1-&gt;2)-alpha-D-Man-(1-&gt;3)-[alpha-D-Man-(1-&gt;6)]-beta-D-Man-(1-&gt;4)-beta-D-GlcNAc-(1-&gt;4)-beta-D-GlcNAc}-L-asparaginyl-[protein]. It participates in protein modification; protein glycosylation. In terms of biological role, catalyzes the first committed step in the biosynthesis of complex N-glycans. It controls conversion of high mannose to complex N-glycans; the final hydrolytic step in the N-glycan maturation pathway. The chain is Alpha-mannosidase 2 (MAN2A1) from Homo sapiens (Human).